A 121-amino-acid polypeptide reads, in one-letter code: Protein CHLORORESPIRATORY REDUCTION 42, chloroplastic (121 aa).

In terms of assembly, biogenesis factor component of the plastidial NDH subcomplex A.

It is found in the plastid. Its subcellular location is the chloroplast. The protein localises to the chloroplast stroma. Functionally, required for both formation and activity of the chloroplast NAD(P)H dehydrogenase (NDH) complex of the photosynthetic electron transport chain. Functions in assembly or stabilization of the NDH complex; probably involved, together with CRR1 and CRR6, in the incorporation of NdhJ, NdhM, NdhK and NdhI into the NDH subcomplex A assembly intermediate (NAI500) to produce the complex NAI400. The protein is Protein CHLORORESPIRATORY REDUCTION 42, chloroplastic of Arabidopsis thaliana (Mouse-ear cress).